The following is a 435-amino-acid chain: Angio-associated migratory cell protein (435 aa).

Residues 1 to 65 are disordered; the sequence is MESESESGAA…EEEEEGNEEG (65 aa). Ser-20 is modified (phosphoserine). The span at 39–63 shows a compositional bias: acidic residues; that stretch reads DPDDLAQEMEDVDFEEEEEEEEGNE. WD repeat units follow at residues 90-130, 133-172, 174-213, 215-255, 259-300, 316-355, 357-396, and 399-434; these read LHSA…LLFE, GHKD…EVWS, EAGD…KTFQ, PNCP…HVLK, GHQG…GVFR, SESN…LRHQ, QHQS…LLTD, and GHTA…QRPD.

The protein resides in the cell membrane. It localises to the cytoplasm. Plays a role in angiogenesis and cell migration. In smooth muscle cell migration, may act through the RhoA pathway. The sequence is that of Angio-associated migratory cell protein (AAMP) from Canis lupus familiaris (Dog).